The sequence spans 22 residues: Piscidin-3 (22 aa).

At Gly-22 the chain carries Glycine amide.

This sequence belongs to the pleurocidin family. Mast cells in gill, skin and gut, and in lining blood vessels in the viscera.

It is found in the secreted. It localises to the membrane. Functionally, antimicrobial peptide with broad-spectrum activity against Gram-positive and Gram-negative bacteria. Rapidly inactivates both channel catfish herpesvirus (ED(50)=11 uM) and frog virus 3 (ED(50)=16 uM) over a wide temperature range. Has hemolytic activity. The polypeptide is Piscidin-3 (Morone chrysops x Morone saxatilis (White bass x Striped bass)).